A 1029-amino-acid polypeptide reads, in one-letter code: Beta-galactosidase (1029 aa).

Substrate is bound by residues asparagine 108 and aspartate 207. Aspartate 207 is a Na(+) binding site. Residues glutamate 422, histidine 424, and glutamate 467 each contribute to the Mg(2+) site. Substrate-binding positions include glutamate 467 and 543-546; that span reads EYAH. Catalysis depends on glutamate 467, which acts as the Proton donor. Glutamate 543 serves as the catalytic Nucleophile. A Mg(2+)-binding site is contributed by asparagine 603. Na(+) contacts are provided by phenylalanine 607 and asparagine 610. Substrate-binding residues include asparagine 610 and tryptophan 1005.

This sequence belongs to the glycosyl hydrolase 2 family. As to quaternary structure, homotetramer. Mg(2+) is required as a cofactor. The cofactor is Na(+).

The catalysed reaction is Hydrolysis of terminal non-reducing beta-D-galactose residues in beta-D-galactosides.. The sequence is that of Beta-galactosidase from Escherichia coli.